Consider the following 817-residue polypeptide: Dynamin-related protein 5A (817 aa).

Over residues 1 to 20 (MANSNTYLTTPTKTPSSRRN) the composition is skewed to polar residues. Residues 1 to 37 (MANSNTYLTTPTKTPSSRRNQQSQSKMQSHSKDPINA) are disordered. The 288-residue stretch at 59–346 (KLPIPEIVAI…LQKRYKEAAP (288 aa)) folds into the Dynamin-type G domain. The interval 69-76 (GGQSDGKS) is G1 motif. 69–76 (GGQSDGKS) lines the GTP pocket. Positions 95–97 (GTR) are G2 motif. The G3 motif stretch occupies residues 175-178 (DTPG). Residues 175–179 (DTPGF) and 244–247 (SKFD) each bind GTP. A G4 motif region spans residues 244–247 (SKFD). A G5 motif region spans residues 280–283 (LPKD). 2 disordered regions span residues 405 to 425 (APEQ…IGSW) and 616 to 658 (LSDT…ETPS). Residues 618–629 (DTSRDEPMKDQE) are compositionally biased toward basic and acidic residues.

The protein belongs to the TRAFAC class dynamin-like GTPase superfamily. Dynamin/Fzo/YdjA family. In terms of tissue distribution, expressed in root and leaf meristems.

Its subcellular location is the cytoplasm. It localises to the cytoskeleton. The protein resides in the phragmoplast. Probable microtubule-associated force-producing protein that is targeted to the forming cell plate during cytokinesis. May play a role in cell division. In Arabidopsis thaliana (Mouse-ear cress), this protein is Dynamin-related protein 5A (DRP5A).